The chain runs to 28 residues: Potassium channel toxin alpha-KTx 9.7 (28 aa).

Cystine bridges form between Cys-3–Cys-19, Cys-6–Cys-24, and Cys-10–Cys-26.

As to expression, expressed by the venom gland.

It is found in the secreted. In terms of biological role, calcium channel activator. Rapidly and reversibly activates ryanodine receptor 1 (RYR1). In Hottentotta judaicus (Black scorpion), this protein is Potassium channel toxin alpha-KTx 9.7.